The sequence spans 264 residues: Phosphate import ATP-binding protein PstB (264 aa).

An ABC transporter domain is found at 11-250 (LKAEALSVYY…DTTEKIFDSP (240 aa)). 43-50 (GPSGCGKS) is an ATP binding site.

Belongs to the ABC transporter superfamily. Phosphate importer (TC 3.A.1.7) family. The complex is composed of two ATP-binding proteins (PstB), two transmembrane proteins (PstC and PstA) and a solute-binding protein (PstS).

The protein localises to the cell inner membrane. It catalyses the reaction phosphate(out) + ATP + H2O = ADP + 2 phosphate(in) + H(+). In terms of biological role, part of the ABC transporter complex PstSACB involved in phosphate import. Responsible for energy coupling to the transport system. The protein is Phosphate import ATP-binding protein PstB of Synechococcus sp. (strain ATCC 27144 / PCC 6301 / SAUG 1402/1) (Anacystis nidulans).